Consider the following 732-residue polypeptide: Segment polarity protein dishevelled homolog DVL-2 (732 aa).

Positions 1-82 (MAETKVIYHL…RVVSWLVSSE (82 aa)) constitute a DIX domain. Disordered regions lie at residues 81–181 (SETS…SSST) and 195–237 (EEDD…SSFS). Over residues 98–111 (DPPPVPPPVPPPPA) the composition is skewed to pro residues. The span at 146–157 (MRRDRVRRRDST) shows a compositional bias: basic and acidic residues. The segment covering 202-213 (RFSSSTEQSSAS) has biased composition (polar residues). Over residues 215-227 (LLKRHRRRRKQRP) the composition is skewed to basic residues. Residues 250–335 (TVTLNMEKYN…KPGPIILTVA (86 aa)) enclose the PDZ domain. The region spanning 424 to 498 (PESGLEVRDR…SEQCYYIFGD (75 aa)) is the DEP domain. 3 stretches are compositionally biased toward low complexity: residues 570–589 (MGSA…SNRS), 612–629 (KSGS…SIRR), and 637–647 (PPSERSTSSRP). A disordered region spans residues 570 to 660 (MGSAGSQHSE…HPPSVHSYAA (91 aa)).

This sequence belongs to the DSH family. As to quaternary structure, can form homomultimers. Interacts with prickle1. Interacts (via the PDZ domain) with ccdc88c/dal and dact1-B/dpr. Interacts (via the DIX domain) with ARP/Axin-related protein and dact1-A/frodo. Interacts with sdc4, possibly via fz7. Interacts directly (via the DEP domain) with efnb1/ephrin-B1. May interact indirectly with the phosphorylated ephrin receptors ephb1 and ephb2 via SH domain-containing adapters. Phosphorylated. Phosphorylation is controlled by frizzled proteins, correlates with the onset of embryo dorsalizing events and is higher in the dorsal half of early cleavage embryos. Phosphorylated on tyrosine residues in response to association with efnb1/ephrin-B1.

The protein resides in the cytoplasm. It is found in the cytoplasmic vesicle. Its subcellular location is the cell projection. The protein localises to the cilium. It localises to the nucleus. The protein resides in the cell membrane. Involved in at least 2 independent signaling cascades, controlling cell fate via canonical Wnt signaling and cell polarity via a planar cell polarity (PCP) cascade. Acts synergistically with dal/dapple-like to activate Wnt signaling, stabilizing ctnnb1/beta-catenin and leading to dorsal axis formation. Also prevents degradation of ctnnb1/beta-catenin by displacing gsk3 from a complex with ARP/Axin-related protein. Has an additional role in anterior-posterior (A/P) axis formation, specifying different neuroectodermal cell fates along the A/P axis in a dose-dependent manner by activating several early patterning genes. In the PCP pathway, required at the cell membrane for PCP-mediated neural and mesodermal convergent extension during gastrulation and subsequent neural tube closure, acting to activate jnk. Also involved in blastopore closure and archenteron elongation during early, but not late, gastrulation. Associates with ephrin receptors and ligands and acts as part of a downstream PCP pathway to mediate ephrin-mediated cell repulsion via activation of rhoa. Required for efnb1/ephrin-B1-driven movement of non-retinal progenitor cells into the retina during eye field formation. Patterns the hindbrain. Required for ciliogenesis. Controls the docking of basal bodies to the apical plasma membrane; mediates the activation, but not localization of rhoa at the apical surface of ciliated cells during basal body docking. Furthermore, required for the association of basal bodies with membrane-bound vesicles and the vesicle-trafficking protein exoc4/sec8, and this association is in turn required for basal body docking. Once basal bodies are docked, required for the planar polarization of basal bodies that underlies ciliary beating and the directional fluid flow across ciliated epithelia. This Xenopus tropicalis (Western clawed frog) protein is Segment polarity protein dishevelled homolog DVL-2.